Consider the following 239-residue polypeptide: Sugar fermentation stimulation protein homolog (239 aa).

It belongs to the SfsA family.

This Methanobrevibacter smithii (strain ATCC 35061 / DSM 861 / OCM 144 / PS) protein is Sugar fermentation stimulation protein homolog.